The chain runs to 681 residues: Fibulin-1 (681 aa).

Positions 1–17 (MDLYMIVLLSLCGLLRA) are cleaved as a signal peptide. Cystine bridges form between Cys-29–Cys-55, Cys-30–Cys-62, Cys-43–Cys-63, Cys-72–Cys-103, Cys-85–Cys-104, Cys-106–Cys-125, Cys-107–Cys-138, Cys-114–Cys-139, Cys-162–Cys-171, Cys-167–Cys-176, Cys-178–Cys-191, Cys-197–Cys-210, Cys-204–Cys-219, Cys-225–Cys-237, Cys-243–Cys-256, Cys-250–Cys-265, Cys-271–Cys-283, Cys-289–Cys-301, Cys-317–Cys-330, Cys-336–Cys-348, Cys-343–Cys-357, Cys-359–Cys-372, Cys-378–Cys-390, Cys-386–Cys-399, Cys-401–Cys-414, Cys-420–Cys-429, Cys-440–Cys-454, Cys-460–Cys-473, Cys-469–Cys-482, Cys-484–Cys-498, Cys-504–Cys-517, Cys-511–Cys-526, and Cys-531–Cys-553. 3 consecutive Anaphylatoxin-like domains span residues 29–63 (CCED…EQCC), 68–107 (EDSI…CECC), and 108–139 (LLGS…RSCC). The 35-residue stretch at 158 to 192 (TEDQCRAAGCAQRCLNGTCSCLDGFKLKTDGKHCE) folds into the EGF-like 1 domain. Asn-173 carries an N-linked (GlcNAc...) asparagine glycan. One can recognise an EGF-like 2; calcium-binding domain in the interval 193–238 (DINECLLGPHHCVTGERCINTLGSYRCQREISCGTGYELTDNNKCK). The region spanning 239–284 (DIDECDLGTHNCAAEMECQNTAGSFRCRPRMQCAAGFIQDALGSCI) is the EGF-like 3; calcium-binding domain. Residues 285–331 (DINECVSVTALSRGQMCFNTVGSFICQRHSVTCGRGYHLNAEGTRCV) enclose the EGF-like 4; calcium-binding domain. The EGF-like 5; calcium-binding domain maps to 332 to 373 (DIDECAGPDNSCDGHGCINLVGSYRCECRTGFIFNSISRSCE). Positions 374–415 (DIDECRNYPGRLCAHKCENILGSYKCSCTAGFKLADDGRNCD) constitute an EGF-like 6; calcium-binding domain. Residues 416 to 455 (DVNECESSPCSQGCANVYGSYQSYCRRGYQLSDADGITCE) enclose the EGF-like 7; calcium-binding domain. One can recognise an EGF-like 8; calcium-binding domain in the interval 456–499 (DIDECALPTGGHICSYRCHNTPGSFHCTCPASGYTLAANGRSCQ). The EGF-like 9; calcium-binding domain maps to 500 to 554 (DIDECLTGTHSCSESESCFNIQGGFRCLSFDCPANYRRSGDTRPRVDRADIIRCV).

Belongs to the fibulin family. In terms of assembly, homomultimerizes and interacts with various extracellular matrix components such as FN1, LAMA1, NID, AGC1 and CSPG2.

Its subcellular location is the secreted. The protein localises to the extracellular space. It localises to the extracellular matrix. Incorporated into fibronectin-containing matrix fibers. May play a role in cell adhesion and migration along protein fibers within the extracellular matrix (ECM). Could be important for certain developmental processes and contribute to the supramolecular organization of ECM architecture, in particular to those of basement membranes. The sequence is that of Fibulin-1 (fbln1) from Danio rerio (Zebrafish).